The primary structure comprises 364 residues: N-alpha-acetyltransferase 30 (364 aa).

A compositionally biased stretch (pro residues) spans 1 to 18; sequence MAEVPPGPSSLLPPPAPA. 3 disordered regions span residues 1–21, 39–65, and 110–164; these read MAEV…AAPA, SEDE…TSAK, and EAAA…SDPA. A phosphoserine mark is found at Ser39 and Ser54. Residues 39–48 show a composition bias toward acidic residues; the sequence is SEDEEDDEEH. Positions 126–135 are enriched in basic and acidic residues; sequence AEGHPGERPP. A compositionally biased stretch (low complexity) spans 152–164; sequence AAAAAAGAASDPA. Phosphoserine occurs at positions 192, 198, and 201. Residues 216–364 enclose the N-acetyltransferase domain; it reads RYVRYESELQ…DALRLKLWLR (149 aa). Lys235 is subject to N6-acetyllysine.

Belongs to the acetyltransferase family. MAK3 subfamily. Component of the N-terminal acetyltransferase C (NatC) complex, which is composed of NAA35, NAA38 and NAA30.

The protein resides in the cytoplasm. It is found in the nucleus. It catalyses the reaction N-terminal L-methionyl-L-leucyl-[protein] + acetyl-CoA = N-terminal N(alpha)-acetyl-L-methionyl-L-leucyl-[protein] + CoA + H(+). It carries out the reaction N-terminal L-methionyl-L-isoleucyl-[protein] + acetyl-CoA = N-terminal N(alpha)-acetyl-L-methionyl-L-isoleucyl-[protein] + CoA + H(+). The catalysed reaction is N-terminal L-methionyl-L-phenylalanyl-[protein] + acetyl-CoA = N-terminal N(alpha)-acetyl-L-methionyl-L-phenylalanyl-[protein] + CoA + H(+). The enzyme catalyses N-terminal L-methionyl-L-tryptophyl-[protein] + acetyl-CoA = N-terminal N(alpha)-acetyl-L-methionyl-L-tryptophyl-[protein] + CoA + H(+). It catalyses the reaction N-terminal L-methionyl-L-tyrosyl-[protein] + acetyl-CoA = N-terminal N(alpha)-acetyl-L-methionyl-L-tyrosyl-[protein] + CoA + H(+). Catalytic subunit of the N-terminal acetyltransferase C (NatC) complex. Catalyzes acetylation of the N-terminal methionine residues of peptides beginning with Met-Leu-Ala and Met-Leu-Gly. N-terminal acetylation protects proteins from ubiquitination and degradation by the N-end rule pathway. Necessary for the lysosomal localization and function of ARL8B sugeesting that ARL8B is a NatC substrate. This Mus musculus (Mouse) protein is N-alpha-acetyltransferase 30 (Naa30).